We begin with the raw amino-acid sequence, 284 residues long: 2-dehydro-3-deoxyphosphooctonate aldolase (284 aa).

This sequence belongs to the KdsA family.

Its subcellular location is the cytoplasm. The enzyme catalyses D-arabinose 5-phosphate + phosphoenolpyruvate + H2O = 3-deoxy-alpha-D-manno-2-octulosonate-8-phosphate + phosphate. The protein operates within carbohydrate biosynthesis; 3-deoxy-D-manno-octulosonate biosynthesis; 3-deoxy-D-manno-octulosonate from D-ribulose 5-phosphate: step 2/3. Its pathway is bacterial outer membrane biogenesis; lipopolysaccharide biosynthesis. The sequence is that of 2-dehydro-3-deoxyphosphooctonate aldolase from Photobacterium profundum (strain SS9).